The chain runs to 246 residues: UDP-N-acetyl-D-mannosaminuronic acid transferase (246 aa).

This sequence belongs to the glycosyltransferase 26 family.

The catalysed reaction is UDP-N-acetyl-alpha-D-mannosaminouronate + N-acetyl-alpha-D-glucosaminyl-di-trans,octa-cis-undecaprenyl diphosphate = beta-D-ManNAcA-(1-&gt;4)-alpha-D-GlcNAc-di-trans,octa-cis-undecaprenyl diphosphate + UDP + H(+). Its pathway is bacterial outer membrane biogenesis; enterobacterial common antigen biosynthesis. In terms of biological role, catalyzes the synthesis of Und-PP-GlcNAc-ManNAcA (Lipid II), the second lipid-linked intermediate involved in enterobacterial common antigen (ECA) synthesis. The protein is UDP-N-acetyl-D-mannosaminuronic acid transferase of Escherichia coli O127:H6 (strain E2348/69 / EPEC).